Here is a 194-residue protein sequence, read N- to C-terminus: Potassium-transporting ATPase KdpC subunit (194 aa).

The helical transmembrane segment at 12–34 threads the bilayer; sequence LFLLLLTGGVYPLLTTALGQWWF.

The protein belongs to the KdpC family. The system is composed of three essential subunits: KdpA, KdpB and KdpC.

The protein resides in the cell inner membrane. Part of the high-affinity ATP-driven potassium transport (or Kdp) system, which catalyzes the hydrolysis of ATP coupled with the electrogenic transport of potassium into the cytoplasm. This subunit acts as a catalytic chaperone that increases the ATP-binding affinity of the ATP-hydrolyzing subunit KdpB by the formation of a transient KdpB/KdpC/ATP ternary complex. This Salmonella enteritidis PT4 (strain P125109) protein is Potassium-transporting ATPase KdpC subunit.